The sequence spans 554 residues: Glutamine--tRNA ligase (554 aa).

The 'HIGH' region motif lies at 34-44 (PEPNGYLHIGH). Residues 35–37 (EPN) and 41–47 (HIGHAKS) contribute to the ATP site. Residues Asp67 and Tyr212 each coordinate L-glutamine. ATP is bound by residues Thr231, 261–262 (RL), and 269–271 (MSK). Positions 268–272 (VMSKR) match the 'KMSKS' region motif. The tract at residues 317–324 (TKQDNTIE) is interaction with tRNA.

The protein belongs to the class-I aminoacyl-tRNA synthetase family. Monomer.

It is found in the cytoplasm. The catalysed reaction is tRNA(Gln) + L-glutamine + ATP = L-glutaminyl-tRNA(Gln) + AMP + diphosphate. The polypeptide is Glutamine--tRNA ligase (Escherichia coli O17:K52:H18 (strain UMN026 / ExPEC)).